We begin with the raw amino-acid sequence, 165 residues long: Putative 4-hydroxy-4-methyl-2-oxoglutarate aldolase (165 aa).

Substrate contacts are provided by residues 80–83 (GGNL) and R102. Position 103 (D103) interacts with a divalent metal cation.

It belongs to the class II aldolase/RraA-like family. In terms of assembly, homotrimer. A divalent metal cation serves as cofactor.

The enzyme catalyses 4-hydroxy-4-methyl-2-oxoglutarate = 2 pyruvate. The catalysed reaction is oxaloacetate + H(+) = pyruvate + CO2. Functionally, catalyzes the aldol cleavage of 4-hydroxy-4-methyl-2-oxoglutarate (HMG) into 2 molecules of pyruvate. Also contains a secondary oxaloacetate (OAA) decarboxylase activity due to the common pyruvate enolate transition state formed following C-C bond cleavage in the retro-aldol and decarboxylation reactions. The chain is Putative 4-hydroxy-4-methyl-2-oxoglutarate aldolase from Cupriavidus necator (strain ATCC 17699 / DSM 428 / KCTC 22496 / NCIMB 10442 / H16 / Stanier 337) (Ralstonia eutropha).